The primary structure comprises 165 residues: PTS system glucose-specific EIIA component (165 aa).

In terms of domain architecture, PTS EIIA type-1 spans 33–137; it reads DPVFAGRMMG…STITPIVITN (105 aa). Zn(2+) contacts are provided by His70 and His85. His85 (tele-phosphohistidine intermediate; for EIIA activity) is an active-site residue. Residue His85 is modified to Phosphohistidine; by HPr.

Heterodimer with glycerol kinase (glpk). Requires Zn(2+) as cofactor.

The protein resides in the cytoplasm. In terms of biological role, the phosphoenolpyruvate-dependent sugar phosphotransferase system (sugar PTS), a major carbohydrate active transport system, catalyzes the phosphorylation of incoming sugar substrates concomitantly with their translocation across the cell membrane. The enzyme II complex composed of PtsG and Crr is involved in glucose transport. In Bacillus anthracis, this protein is PTS system glucose-specific EIIA component (crr).